Here is a 908-residue protein sequence, read N- to C-terminus: Magnesium-transporting ATPase, P-type 1 (908 aa).

Residues 1-20 (MTDMNIENRKLNRPASENDK) show a composition bias toward basic and acidic residues. The segment at 1-21 (MTDMNIENRKLNRPASENDKQ) is disordered. The Cytoplasmic portion of the chain corresponds to 1–80 (MTDMNIENRK…QVPPALIQLL (80 aa)). A helical membrane pass occupies residues 81–101 (QAFNNPFIYVLMALAGVSFIT). At 102–113 (DYWLPLRRGEET) the chain is on the extracellular side. The helical transmembrane segment at 114 to 134 (DLTGVLIILTMVSLSGLLRFW) threads the bilayer. Residues 135 to 293 (QEFRTNRAAQ…QTAFDRGVNS (159 aa)) lie on the Cytoplasmic side of the membrane. The chain crosses the membrane as a helical span at residues 294–314 (VSWLLIRFMLIMVPVVLLING). Residues 315 to 323 (FSKGDWVEA) lie on the Extracellular side of the membrane. Residues 324 to 341 (SLFALAVAVGLTPEMLPM) traverse the membrane as a helical segment. Glu-337 contacts Mg(2+). The Cytoplasmic segment spans residues 342–704 (IVSSNLAKGA…IKGRETFGNI (363 aa)). The 4-aspartylphosphate intermediate role is filled by Asp-379. Asp-650, Asp-654, and Asn-718 together coordinate Mg(2+). The helical transmembrane segment at 705–724 (IKYLNMTASSNFGNVFSVLV) threads the bilayer. Residues 725–733 (ASAFIPFLP) lie on the Extracellular side of the membrane. Residues 734–753 (MLAIHLLIQNLMYDISQLSL) form a helical membrane-spanning segment. The Mg(2+) site is built by Asn-743 and Asp-747. The Cytoplasmic portion of the chain corresponds to 754–775 (PWDKMDKEFLRKPRKWDAKNIG). A helical membrane pass occupies residues 776-799 (RFMLWIGPTSSIFDITTFALMWYV). The Extracellular portion of the chain corresponds to 800–808 (FAANNVEAQ). Residues 809–827 (ALFQSGWFIEGLLSQTLVV) traverse the membrane as a helical segment. Residues 828 to 840 (HMLRTQKIPFIQS) lie on the Cytoplasmic side of the membrane. Residues 841–860 (RATLPVLLTTGLIMAIGIYI) form a helical membrane-spanning segment. Residues 861 to 875 (PFSPLGAMVGLEPLP) lie on the Extracellular side of the membrane. A helical transmembrane segment spans residues 876-895 (LSYFPWLVATLLSYCLVAQG). The Cytoplasmic segment spans residues 896 to 908 (MKRFYIKRFGQWF).

This sequence belongs to the cation transport ATPase (P-type) (TC 3.A.3) family. Type IIIB subfamily.

It is found in the cell inner membrane. It catalyses the reaction Mg(2+)(out) + ATP + H2O = Mg(2+)(in) + ADP + phosphate + H(+). Its function is as follows. Mediates magnesium influx to the cytosol. The polypeptide is Magnesium-transporting ATPase, P-type 1 (mgtB) (Salmonella typhimurium (strain LT2 / SGSC1412 / ATCC 700720)).